The sequence spans 690 residues: MDQDFDLDEGAGQFNLKTTLMMFTSNDSQNDDGIWSPGSPYQALEDPSFLDKHFVSDPDRYTADELYSALEKMDGKSDLIGMDDMDNDNCYSLSPPDSGSLPISPASTSPSSYHSSGGEDLMDCYPSIDILQQASEELLYSKDDDYEICSSGPLLAYTNANSVATSAVHQNQQQQQRRLNQAGFPHQNSNGLVRFKSSQPRVLNPASISLNAPSSSFNPQSTSSTPATSSSSSSSTNGGFVKSSTGERRKYPPLRLDEEEIKLCKKEGICLPDFFPLTKAEERDLKRIRRKIRNKRSAQTSRKRKQDYIEQLEDRVSESTKENQALKQQIERLSSENQSVISQLKKLQAQLGQNAKRTTQAGRCLAVFMLSACLLVSPQLSPLGNQDNQKVLECIEEACQPSATSMNSANSAQRAIAGVTAPSVVIPSGGPVMVSTNANRQMNRNAVLNHHNNSKYPASGNQNHHPIALEDLNHPPPTLQPKQSYQQQHQPSMYRRSDETIAMAMAKIGARKGSSTSSSSASSVASSTSTSSATSPIYRTSRTLGAFEDQCDASSDDSNCANMPSLVPMKMSAQPPKRKIVTMNGQPRVTYRAVPASSVNVEQAQYYKVPQQKVQYVTMDRPIKYEVLQLNDYIKMEEESTIRLPNSWSTAGPRLHPQVNASSRTVRPLTVATPVHYNGPSAKKIKTQMF.

Disordered stretches follow at residues 87–118 (NDNCYSLSPPDSGSLPISPASTSPSSYHSSGG), 166–192 (SAVHQNQQQQQRRLNQAGFPHQNSNGL), and 205–253 (PASI…KYPP). Low complexity-rich tracts occupy residues 100-116 (SLPISPASTSPSSYHSS), 170-181 (QNQQQQQRRLNQ), and 213-236 (PSSSFNPQSTSSTPATSSSSSSST). The bZIP domain maps to 284–347 (DLKRIRRKIR…QSVISQLKKL (64 aa)). The segment at 286-321 (KRIRRKIRNKRSAQTSRKRKQDYIEQLEDRVSESTK) is basic motif. Positions 295–350 (KRSAQTSRKRKQDYIEQLEDRVSESTKENQALKQQIERLSSENQSVISQLKKLQAQ) form a coiled coil. A leucine-zipper region spans residues 326–333 (LKQQIERL). The segment covering 451–464 (HNNSKYPASGNQNH) has biased composition (polar residues). 2 disordered regions span residues 451–495 (HNNS…SMYR) and 509–536 (GARKGSSTSSSSASSVASSTSTSSATSP). Low complexity-rich tracts occupy residues 480–492 (QPKQSYQQQHQPS) and 514–535 (SSTSSSSASSVASSTSTSSATS).

Belongs to the bZIP family.

It is found in the nucleus. In terms of biological role, probable transcription factor, required during migration of the gonadal distal tip cells (DTC). Probably regulates cell adhesion of DTCs via modulation of expression of genes involved in integrin-mediated adhesion, including tln-1, src-1, and integrin pat-2. Modulates expression of genes involved in protein trafficking during embryogenesis, including emo-1, sec-61, calu-1, sec-24.1, enpl-1, sar-1 and tfg-1. This chain is CREB-H transcription factor homolog let-607, found in Caenorhabditis elegans.